The chain runs to 322 residues: Cytochrome c biogenesis protein CcsA (322 aa).

7 consecutive transmembrane segments (helical) span residues 9–29, 44–64, 68–88, 143–163, 226–246, 260–274, and 289–309; these read ILTH…LITL, GMIV…VSSG, LSNL…LHTI, MLLS…ILII, IISL…VWAN, TWAF…IYLH, and IASI…LLGI.

It belongs to the CcmF/CycK/Ccl1/NrfE/CcsA family. In terms of assembly, may interact with Ccs1.

Its subcellular location is the plastid. It localises to the chloroplast thylakoid membrane. Its function is as follows. Required during biogenesis of c-type cytochromes (cytochrome c6 and cytochrome f) at the step of heme attachment. In Hordeum vulgare (Barley), this protein is Cytochrome c biogenesis protein CcsA.